The chain runs to 165 residues: Large ribosomal subunit protein uL10 (165 aa).

Belongs to the universal ribosomal protein uL10 family. As to quaternary structure, part of the ribosomal stalk of the 50S ribosomal subunit. The N-terminus interacts with L11 and the large rRNA to form the base of the stalk. The C-terminus forms an elongated spine to which L12 dimers bind in a sequential fashion forming a multimeric L10(L12)X complex.

Its function is as follows. Forms part of the ribosomal stalk, playing a central role in the interaction of the ribosome with GTP-bound translation factors. The chain is Large ribosomal subunit protein uL10 from Burkholderia mallei (strain NCTC 10229).